A 151-amino-acid chain; its full sequence is Deoxyuridine 5'-triphosphate nucleotidohydrolase (151 aa).

Substrate contacts are provided by residues 70 to 72 (RSG), Asn83, 87 to 89 (LID), and Met97.

The protein belongs to the dUTPase family. The cofactor is Mg(2+).

The catalysed reaction is dUTP + H2O = dUMP + diphosphate + H(+). The protein operates within pyrimidine metabolism; dUMP biosynthesis; dUMP from dCTP (dUTP route): step 2/2. This enzyme is involved in nucleotide metabolism: it produces dUMP, the immediate precursor of thymidine nucleotides and it decreases the intracellular concentration of dUTP so that uracil cannot be incorporated into DNA. In Salmonella enteritidis PT4 (strain P125109), this protein is Deoxyuridine 5'-triphosphate nucleotidohydrolase.